The chain runs to 102 residues: Cytochrome c3 (102 aa).

16 residues coordinate heme c: H26, H29, C34, C37, H38, H39, C50, C55, H56, H73, C81, C84, H85, C95, C98, and H99.

It depends on heme as a cofactor.

The protein localises to the periplasm. Participates in sulfate respiration coupled with phosphorylation by transferring electrons from the enzyme dehydrogenase to ferredoxin. This chain is Cytochrome c3, found in Desulfovibrio desulfuricans.